Here is a 454-residue protein sequence, read N- to C-terminus: PGPTLYADWGDMIQVTLKNSMPDNGTGIHWHGLRQYHTCTEDGVPGITECPLAPGDTKTYTFQATQFGTSWYHSHYSSQYGEGMLGGIVINGPATSNYDVDLGVYTISDWYYTPVFALGERIAHSQAGPPSGDNGLINGSMVAPAGQTGGKYTTNTITAGKKYRLRLINTSVDNHFMVSLDNHAFTVITSDFVPIVPYTANWIFIGIGQRYDVIITANQTVGSYWFRAEVQNGCGTNNNNGNIKSIFTYSGAASTTPSSSATPYTGRCTDETGIIPFWDSFVPSGPLSGNVEQLNVAINIGVDASGPIVTWGINLSAIDVDWKKPILQYVLDGNNSWPASENLIELPNAAQWYYWVIQEVPGNVNGNPVSINVPHPMHLHGHDFFLLGTGVGTYNNTINGPSLDYDNPTRRDVAMLPAGGWMVLAFQTDNPGAWLMHCHIAWHVSEGLAVQFQG.

Plastocyanin-like domains follow at residues 1 to 95 and 101 to 252; these read PGPT…GPAT and DLGV…YSGA. N-linked (GlcNAc...) asparagine glycosylation occurs at asparagine 24. Cu cation contacts are provided by histidine 29, histidine 31, histidine 73, and histidine 75. Asparagine 138, asparagine 169, asparagine 218, asparagine 314, and asparagine 334 each carry an N-linked (GlcNAc...) asparagine glycan. Residues 319–454 enclose the Plastocyanin-like 3 domain; it reads DVDWKKPILQ…SEGLAVQFQG (136 aa). Residues histidine 375, histidine 378, and histidine 380 each coordinate Cu cation. Asparagine 395 carries N-linked (GlcNAc...) asparagine glycosylation. Histidine 437, cysteine 438, histidine 439, and histidine 443 together coordinate Cu cation.

The protein belongs to the multicopper oxidase family. The cofactor is Cu cation.

The protein localises to the secreted. It carries out the reaction 4 hydroquinone + O2 = 4 benzosemiquinone + 2 H2O. Its function is as follows. Lignin degradation and detoxification of lignin-derived products. The chain is Laccase-3 (lcc3) from Botryotinia fuckeliana (Noble rot fungus).